Consider the following 78-residue polypeptide: Acyl carrier protein (78 aa).

Residues Ser-2 to Ser-77 form the Carrier domain. At Ser-37 the chain carries O-(pantetheine 4'-phosphoryl)serine.

It belongs to the acyl carrier protein (ACP) family. 4'-phosphopantetheine is transferred from CoA to a specific serine of apo-ACP by AcpS. This modification is essential for activity because fatty acids are bound in thioester linkage to the sulfhydryl of the prosthetic group.

It is found in the cytoplasm. It participates in lipid metabolism; fatty acid biosynthesis. Its function is as follows. Carrier of the growing fatty acid chain in fatty acid biosynthesis. This Bartonella quintana (strain Toulouse) (Rochalimaea quintana) protein is Acyl carrier protein.